Here is a 447-residue protein sequence, read N- to C-terminus: UDP-N-acetylmuramate--L-alanine ligase (447 aa).

Residue 107-113 (GTHGKTT) participates in ATP binding.

It belongs to the MurCDEF family.

Its subcellular location is the cytoplasm. It carries out the reaction UDP-N-acetyl-alpha-D-muramate + L-alanine + ATP = UDP-N-acetyl-alpha-D-muramoyl-L-alanine + ADP + phosphate + H(+). Its pathway is cell wall biogenesis; peptidoglycan biosynthesis. Functionally, cell wall formation. In Rubrobacter xylanophilus (strain DSM 9941 / JCM 11954 / NBRC 16129 / PRD-1), this protein is UDP-N-acetylmuramate--L-alanine ligase.